A 246-amino-acid polypeptide reads, in one-letter code: uncharacterized protein (246 aa).

Belongs to the BtpA family.

This is an uncharacterized protein from Archaeoglobus fulgidus (strain ATCC 49558 / DSM 4304 / JCM 9628 / NBRC 100126 / VC-16).